The sequence spans 729 residues: MGTERKRKVSLFDVMEDPSLSSKNTKSNGLGLAAAAGGGSNLINKWNGKAYSQRYFEILEKRRDLPVWLQKDDFLNTLNSNQTLILVGETGSGKTTQIPQFVLDAVVADNSDKGRKWLVGCTQPRRVAAMSVSRRVADEMDVSIGEEVGYSIRFEDCTSSRTMLKYLTDGMLLREAMADPLLERYKVIILDEAHERTLATDVLFGLLKEVLRNRPDLKLVVMSATLEAEKFQEYFSGAPLMKVPGRLHPVEIFYTQEPERDYLEAAIRTVVQIHMCEPPGDILVFLTGEEEIEDACRKINKEVSNLGDQVGPVKVVPLYSTLPPAMQQKIFDPAPVPLTEGGPAGRKIVVSTNIAETSLTIDGIVYVIDPGFAKQKVYNPRIRVESLLVSPISKASAHQRSGRAGRTRPGKCFRLYTEKSFNNDLQPQTYPEILRSNLANTVLTLKKLGIDDLVHFDFMDPPAPETLMRALEVLNYLGALDDEGNLTKTGEIMSEFPLDPQMSKMLIVSPEFNCSNEILSVSAMLSVPNCFVRPREAQKAADEAKARFGHIDGDHLTLLNVYHAYKQNNEDPNWCFENFVNNRAMKSADNVRQQLVRIMSRFNLKMCSTDFNSRDYYVNIRKAMLAGYFMQVAHLERTGHYLTVKDNQVVHLHPSNCLDHKPEWVIYNEYVLTTRNFIRTVTDIRGEWLVDVAQHYYDLSNFPNCEAKRALEKLYKKREREKNESKNRK.

The Helicase ATP-binding domain maps to 75-244; that stretch reads LNTLNSNQTL…FSGAPLMKVP (170 aa). 88–95 is a binding site for ATP; the sequence is GETGSGKT. A DEAH box motif is present at residues 191 to 194; the sequence is DEAH. One can recognise a Helicase C-terminal domain in the interval 269 to 449; it reads TVVQIHMCEP…NTVLTLKKLG (181 aa).

This sequence belongs to the DEAD box helicase family. DEAH subfamily. PRP43 sub-subfamily.

It carries out the reaction ATP + H2O = ADP + phosphate + H(+). Its function is as follows. May be involved in pre-mRNA splicing. This chain is Probable pre-mRNA-splicing factor ATP-dependent RNA helicase DEAH3, found in Arabidopsis thaliana (Mouse-ear cress).